The primary structure comprises 383 residues: Outer membrane protein Omp-EA (383 aa).

The signal sequence occupies residues 1 to 21; that stretch reads MKRNILAVLIPALLAAGAANA. Residues 22 to 30 lie on the Periplasmic side of the membrane; the sequence is AEIYNKDGN. The beta stranded transmembrane segment at 31 to 45 threads the bilayer; that stretch reads KLDLYGKVKAMRYLS. Topologically, residues 46–58 are extracellular; it reads DADSNASNNADKS. A beta stranded membrane pass occupies residues 59–70; the sequence is YTRIGFKGQTLI. Topologically, residues 71–74 are periplasmic; the sequence is NDQL. A beta stranded transmembrane segment spans residues 75 to 86; it reads TGYGQWEYNFSL. Residues 87-100 lie on the Extracellular side of the membrane; it reads SNSESSSDAQSGNK. A beta stranded membrane pass occupies residues 101–109; the sequence is TRLGFAGLK. Over 110 to 112 the chain is Periplasmic; it reads LKD. A beta stranded membrane pass occupies residues 113–122; it reads YGSVDYGRNY. Residues 123-155 lie on the Extracellular side of the membrane; sequence GVIYDVEAFTDMMPEFGATGYTRTDTYMLTRGN. Residues 156–164 traverse the membrane as a beta stranded segment; sequence SMLTWRNSD. Topologically, residues 165–171 are periplasmic; it reads FFGLVDG. The chain crosses the membrane as a beta stranded span at residues 172 to 178; the sequence is LKIALQY. Residues 179 to 198 are Extracellular-facing; sequence QGKNEGSGTRATNVSNGDGY. Residues 199 to 206 traverse the membrane as a beta stranded segment; that stretch reads GASLSYKI. Over 207-209 the chain is Periplasmic; the sequence is VEG. The beta stranded transmembrane segment at 210–219 threads the bilayer; sequence LTINGAMSSS. Topologically, residues 220–243 are extracellular; sequence NRLNANSASSTTSQKMAAYGSGGR. A beta stranded membrane pass occupies residues 244-252; it reads AEAWATGLK. The Periplasmic portion of the chain corresponds to 253–258; the sequence is YDANGV. Residues 259-268 traverse the membrane as a beta stranded segment; the sequence is YLAGTYAETR. At 269-296 the chain is on the extracellular side; that stretch reads NTNPFSGASYTFAGNSTATAVSGYANKV. The chain crosses the membrane as a beta stranded span at residues 297–307; sequence QNTELVAQYQF. Residues 308-310 lie on the Periplasmic side of the membrane; it reads DSG. A beta stranded transmembrane segment spans residues 311–319; it reads LRPSLAYVQ. Topologically, residues 320–335 are extracellular; it reads TKAKDIENGIGDADLS. The chain crosses the membrane as a beta stranded span at residues 336-346; sequence KFVDVAATYYF. The Periplasmic segment spans residues 347-351; that stretch reads NKNMS. A beta stranded membrane pass occupies residues 352–361; it reads AFVDYKVNLL. The Extracellular portion of the chain corresponds to 362-372; sequence SDSNKLHLNTD. The beta stranded transmembrane segment at 373–383 threads the bilayer; it reads DIVAVGLVYQF.

The protein belongs to the Gram-negative porin family. In terms of assembly, homotrimer.

It is found in the cell outer membrane. May play an important role in maintaining pathogenicity in plants. This Erwinia amylovora (Fire blight bacteria) protein is Outer membrane protein Omp-EA (omp-EA).